The primary structure comprises 117 residues: G antigen 4 (117 aa).

The disordered stretch occupies residues 1-117 (MSWRGRSTYY…PEEGEKQSQC (117 aa)). 2 stretches are compositionally biased toward acidic residues: residues 32–45 (FSDE…EEGE) and 87–96 (ECEDGPDGQE). Positions 103-117 (EEVKTPEEGEKQSQC) are enriched in basic and acidic residues.

Belongs to the GAGE family. Expressed in a variety of tumor tissues but not in normal tissues, except testis.

In terms of biological role, antigen, recognized on melanoma by autologous cytolytic T-lymphocytes. This is G antigen 4 from Homo sapiens (Human).